Here is a 148-residue protein sequence, read N- to C-terminus: Endoribonuclease YbeY (148 aa).

Zn(2+)-binding residues include His113, His117, and His123.

Belongs to the endoribonuclease YbeY family. The cofactor is Zn(2+).

Its subcellular location is the cytoplasm. In terms of biological role, single strand-specific metallo-endoribonuclease involved in late-stage 70S ribosome quality control and in maturation of the 3' terminus of the 16S rRNA. This Borrelia recurrentis (strain A1) protein is Endoribonuclease YbeY.